A 118-amino-acid chain; its full sequence is Small ribosomal subunit protein uS13 (118 aa).

Residues 93 to 118 (RGLPVRGQRTKTNARTRKGPRKPIRK) form a disordered region.

The protein belongs to the universal ribosomal protein uS13 family. Part of the 30S ribosomal subunit. Forms a loose heterodimer with protein S19. Forms two bridges to the 50S subunit in the 70S ribosome.

Located at the top of the head of the 30S subunit, it contacts several helices of the 16S rRNA. In the 70S ribosome it contacts the 23S rRNA (bridge B1a) and protein L5 of the 50S subunit (bridge B1b), connecting the 2 subunits; these bridges are implicated in subunit movement. Contacts the tRNAs in the A and P-sites. This chain is Small ribosomal subunit protein uS13, found in Azotobacter vinelandii (strain DJ / ATCC BAA-1303).